The chain runs to 353 residues: Methionine import ATP-binding protein MetN (353 aa).

The region spanning 7 to 249 (LENIDVTFKQ…PKEELSRQFV (243 aa)) is the ABC transporter domain. Residue 41–48 (GYSGAGKS) participates in ATP binding.

Belongs to the ABC transporter superfamily. Methionine importer (TC 3.A.1.24) family. As to quaternary structure, the complex is composed of two ATP-binding proteins (MetN), two transmembrane proteins (MetI) and a solute-binding protein (MetQ).

Its subcellular location is the cell membrane. It carries out the reaction L-methionine(out) + ATP + H2O = L-methionine(in) + ADP + phosphate + H(+). The enzyme catalyses D-methionine(out) + ATP + H2O = D-methionine(in) + ADP + phosphate + H(+). Functionally, part of the ABC transporter complex MetNIQ involved in methionine import. Responsible for energy coupling to the transport system. This chain is Methionine import ATP-binding protein MetN, found in Ligilactobacillus salivarius (strain UCC118) (Lactobacillus salivarius).